The following is a 212-amino-acid chain: Probable GTP-binding protein EngB (212 aa).

The EngB-type G domain maps to 23–197 (TGIEVAFAGR…ERILDGWFGL (175 aa)). GTP is bound by residues 31-38 (GRSNAGKS), 58-62 (GRTQL), 76-79 (DLPG), 143-146 (TKAD), and 176-178 (FSS). Mg(2+)-binding residues include Ser38 and Thr60.

It belongs to the TRAFAC class TrmE-Era-EngA-EngB-Septin-like GTPase superfamily. EngB GTPase family. It depends on Mg(2+) as a cofactor.

Its function is as follows. Necessary for normal cell division and for the maintenance of normal septation. This Alteromonas mediterranea (strain DSM 17117 / CIP 110805 / LMG 28347 / Deep ecotype) protein is Probable GTP-binding protein EngB.